The sequence spans 645 residues: Macrolide export ATP-binding/permease protein MacB (645 aa).

The ABC transporter domain maps to 6–244; sequence IELEGIRRSY…SSIAVVPWQA (239 aa). 42–49 provides a ligand contact to ATP; it reads GASGSGKS. 4 helical membrane passes run 274–294, 526–546, 574–594, and 596–616; these read ALTL…MAIG, IAAI…LITV, AVVL…VIGV, and AALL…GALM.

This sequence belongs to the ABC transporter superfamily. Macrolide exporter (TC 3.A.1.122) family. In terms of assembly, homodimer.

It is found in the cell inner membrane. In terms of biological role, non-canonical ABC transporter that contains transmembrane domains (TMD), which form a pore in the inner membrane, and an ATP-binding domain (NBD), which is responsible for energy generation. Confers resistance against macrolides. The chain is Macrolide export ATP-binding/permease protein MacB from Nitrobacter winogradskyi (strain ATCC 25391 / DSM 10237 / CIP 104748 / NCIMB 11846 / Nb-255).